We begin with the raw amino-acid sequence, 259 residues long: 1,2-dihydroxy-1,2-dihydronaphthalene dehydrogenase (259 aa).

NAD(+) contacts are provided by residues 8-35 (AITG…SALV) and aspartate 58. Residue serine 140 coordinates substrate. The Proton acceptor role is filled by tyrosine 153. Lysine 157 is an NAD(+) binding site.

This sequence belongs to the short-chain dehydrogenases/reductases (SDR) family.

The catalysed reaction is (1R,2S)-1,2-dihydronaphthalene-1,2-diol + NAD(+) = naphthalene-1,2-diol + NADH + H(+). The protein operates within aromatic compound metabolism; naphthalene degradation. Its function is as follows. Catalyzes the oxidation of naphthalene dihydrodiol into 1,2-dihydroxynaphthalene. The sequence is that of 1,2-dihydroxy-1,2-dihydronaphthalene dehydrogenase from Ralstonia sp.